Here is a 467-residue protein sequence, read N- to C-terminus: Trigger factor (467 aa).

In terms of domain architecture, PPIase FKBP-type spans 162–243; the sequence is GDFVSIDLSA…LNSVKERHLP (82 aa). A compositionally biased stretch (acidic residues) spans 426 to 435; it reads EEGNELDLDE. Residues 426–467 are disordered; that stretch reads EEGNELDLDELFGTQAGEEQGEQAEGTEATDEQSAKADAKAE. Residues 436 to 452 show a composition bias toward low complexity; sequence LFGTQAGEEQGEQAEGT. The segment covering 458 to 467 has biased composition (basic and acidic residues); that stretch reads QSAKADAKAE.

The protein belongs to the FKBP-type PPIase family. Tig subfamily.

The protein resides in the cytoplasm. It carries out the reaction [protein]-peptidylproline (omega=180) = [protein]-peptidylproline (omega=0). Its function is as follows. Involved in protein export. Acts as a chaperone by maintaining the newly synthesized protein in an open conformation. Functions as a peptidyl-prolyl cis-trans isomerase. The polypeptide is Trigger factor (Saccharopolyspora erythraea (strain ATCC 11635 / DSM 40517 / JCM 4748 / NBRC 13426 / NCIMB 8594 / NRRL 2338)).